The sequence spans 148 residues: 3-hydroxyacyl-[acyl-carrier-protein] dehydratase FabZ (148 aa).

H48 is a catalytic residue.

Belongs to the thioester dehydratase family. FabZ subfamily.

Its subcellular location is the cytoplasm. It carries out the reaction a (3R)-hydroxyacyl-[ACP] = a (2E)-enoyl-[ACP] + H2O. In terms of biological role, involved in unsaturated fatty acids biosynthesis. Catalyzes the dehydration of short chain beta-hydroxyacyl-ACPs and long chain saturated and unsaturated beta-hydroxyacyl-ACPs. The protein is 3-hydroxyacyl-[acyl-carrier-protein] dehydratase FabZ of Campylobacter fetus subsp. fetus (strain 82-40).